We begin with the raw amino-acid sequence, 206 residues long: Superoxide dismutase [Mn] (206 aa).

Mn(2+) is bound by residues His27, His82, Asp168, and His172.

It belongs to the iron/manganese superoxide dismutase family. As to quaternary structure, homodimer. It depends on Mn(2+) as a cofactor.

It carries out the reaction 2 superoxide + 2 H(+) = H2O2 + O2. Destroys superoxide anion radicals which are normally produced within the cells and which are toxic to biological systems. The sequence is that of Superoxide dismutase [Mn] (sodA) from Salmonella typhimurium (strain LT2 / SGSC1412 / ATCC 700720).